A 156-amino-acid polypeptide reads, in one-letter code: MSTSICPCGSGNLLDACCGHYHAGHPAPCATALMRSRYSAYVLGLVDYLVATTLPAQQAGLDRHAIGAWSAQSTWLGLEVESSEVFGGQPEHAFVTFTARWHDSTGEHSHREQSSFVQNDGRWYFIDPTVEVKVGRNDACLCGSGQKFKKCCSSYL.

This sequence belongs to the UPF0225 family.

The sequence is that of UPF0225 protein PFLU_1319 from Pseudomonas fluorescens (strain SBW25).